Reading from the N-terminus, the 334-residue chain is NAC domain-containing protein 66 (334 aa).

Positions 11–175 constitute an NAC domain; sequence VPPGFRFHPT…GWVVCRVFKK (165 aa). The DNA-binding element occupies 111–181; the sequence is IGMRKTLVFY…VFKKNNLCKN (71 aa).

As to expression, mostly expressed in anthers. Also present in pollen, base of siliques and inflorescence stems.

The protein resides in the nucleus. Functionally, transcription activator of genes involved in biosynthesis of secondary walls. Together with NST1, required for the secondary cell wall thickening of the anther endocethium, which is necessary for anther dehiscence. May also regulate the secondary cell wall lignification of other tissues such as tracheary elements. The polypeptide is NAC domain-containing protein 66 (NAC066) (Arabidopsis thaliana (Mouse-ear cress)).